We begin with the raw amino-acid sequence, 182 residues long: dTTP/UTP pyrophosphatase (182 aa).

D64 (proton acceptor) is an active-site residue.

It belongs to the Maf family. YhdE subfamily. The cofactor is a divalent metal cation.

It is found in the cytoplasm. It catalyses the reaction dTTP + H2O = dTMP + diphosphate + H(+). It carries out the reaction UTP + H2O = UMP + diphosphate + H(+). Nucleoside triphosphate pyrophosphatase that hydrolyzes dTTP and UTP. May have a dual role in cell division arrest and in preventing the incorporation of modified nucleotides into cellular nucleic acids. The chain is dTTP/UTP pyrophosphatase from Thermosipho melanesiensis (strain DSM 12029 / CIP 104789 / BI429).